Here is a 217-residue protein sequence, read N- to C-terminus: Transcriptional regulatory protein CutR (217 aa).

The Response regulatory domain occupies 2-116 (RVLVVEDEQL…ELIARVRALG (115 aa)). Asp51 carries the post-translational modification 4-aspartylphosphate. A DNA-binding region (ompR/PhoB-type) is located at residues 124 to 217 (PPVLERAGIK…VTVPGSGYRI (94 aa)).

Its function is as follows. Member of the two-component regulatory system CutS/CutR, involved in the regulation of copper metabolism. CutR suppresses a defective melC1 gene, encoding a putative copper-transfer gene, probably by altering copper metabolism. This is Transcriptional regulatory protein CutR (cutR) from Streptomyces lividans.